A 391-amino-acid polypeptide reads, in one-letter code: tRNA-specific 2-thiouridylase MnmA (391 aa).

ATP-binding positions include 9-16 (GMSGGVDS) and Met35. Positions 95-97 (NPD) are interaction with target base in tRNA. Cys100 acts as the Nucleophile in catalysis. A disulfide bridge connects residues Cys100 and Cys196. Gly124 contacts ATP. The interaction with tRNA stretch occupies residues 146 to 148 (KDQ). Residue Cys196 is the Cysteine persulfide intermediate of the active site. Residues 308 to 309 (RY) are interaction with tRNA.

This sequence belongs to the MnmA/TRMU family.

It localises to the cytoplasm. The catalysed reaction is S-sulfanyl-L-cysteinyl-[protein] + uridine(34) in tRNA + AH2 + ATP = 2-thiouridine(34) in tRNA + L-cysteinyl-[protein] + A + AMP + diphosphate + H(+). Functionally, catalyzes the 2-thiolation of uridine at the wobble position (U34) of tRNA, leading to the formation of s(2)U34. This is tRNA-specific 2-thiouridylase MnmA from Burkholderia cenocepacia (strain HI2424).